Consider the following 439-residue polypeptide: Methionine aminopeptidase 2-2 (439 aa).

A disordered region spans residues 1–90 (MAAQTTEKLD…RVPVSNLFPN (90 aa)). Residues 28-41 (EAEEDSDDAQDEGA) show a composition bias toward acidic residues. Basic residues predominate over residues 56–72 (KKKKKKKPKKKSKKKGG). Residue His-196 coordinates substrate. Residues Asp-216, Asp-227, and His-296 each coordinate a divalent metal cation. His-304 contacts substrate. A divalent metal cation-binding residues include Glu-329 and Glu-424.

The protein belongs to the peptidase M24A family. Methionine aminopeptidase eukaryotic type 2 subfamily. Co(2+) serves as cofactor. Zn(2+) is required as a cofactor. Requires Mn(2+) as cofactor. It depends on Fe(2+) as a cofactor.

It is found in the cytoplasm. The catalysed reaction is Release of N-terminal amino acids, preferentially methionine, from peptides and arylamides.. In terms of biological role, cotranslationally removes the N-terminal methionine from nascent proteins. The N-terminal methionine is often cleaved when the second residue in the primary sequence is small and uncharged (Met-Ala-, Cys, Gly, Pro, Ser, Thr, or Val). This chain is Methionine aminopeptidase 2-2, found in Penicillium rubens (strain ATCC 28089 / DSM 1075 / NRRL 1951 / Wisconsin 54-1255) (Penicillium chrysogenum).